A 417-amino-acid chain; its full sequence is Gamma-glutamyl phosphate reductase (417 aa).

It belongs to the gamma-glutamyl phosphate reductase family.

It is found in the cytoplasm. The enzyme catalyses L-glutamate 5-semialdehyde + phosphate + NADP(+) = L-glutamyl 5-phosphate + NADPH + H(+). It participates in amino-acid biosynthesis; L-proline biosynthesis; L-glutamate 5-semialdehyde from L-glutamate: step 2/2. Catalyzes the NADPH-dependent reduction of L-glutamate 5-phosphate into L-glutamate 5-semialdehyde and phosphate. The product spontaneously undergoes cyclization to form 1-pyrroline-5-carboxylate. In Aeromonas salmonicida (strain A449), this protein is Gamma-glutamyl phosphate reductase.